A 112-amino-acid chain; its full sequence is Large ribosomal subunit protein uL22 (112 aa).

The protein belongs to the universal ribosomal protein uL22 family. As to quaternary structure, part of the 50S ribosomal subunit.

Its function is as follows. This protein binds specifically to 23S rRNA; its binding is stimulated by other ribosomal proteins, e.g. L4, L17, and L20. It is important during the early stages of 50S assembly. It makes multiple contacts with different domains of the 23S rRNA in the assembled 50S subunit and ribosome. The globular domain of the protein is located near the polypeptide exit tunnel on the outside of the subunit, while an extended beta-hairpin is found that lines the wall of the exit tunnel in the center of the 70S ribosome. This Sulfurovum sp. (strain NBC37-1) protein is Large ribosomal subunit protein uL22.